We begin with the raw amino-acid sequence, 345 residues long: RNA polymerase II holoenzyme cyclin-like subunit (345 aa).

Residues 23–147 enclose the Cyclin N-terminal domain; that stretch reads ESRRKLLLLE…KLAEFEFYLI (125 aa).

Belongs to the cyclin family. Cyclin C subfamily. As to quaternary structure, component of the SRB8-11 complex, a regulatory module of the Mediator complex.

It localises to the nucleus. Component of the SRB8-11 complex. The SRB8-11 complex is a regulatory module of the Mediator complex which is itself involved in regulation of basal and activated RNA polymerase II-dependent transcription. The SRB8-11 complex may be involved in the transcriptional repression of a subset of genes regulated by Mediator. It may inhibit the association of the Mediator complex with RNA polymerase II to form the holoenzyme complex. The SRB8-11 complex phosphorylates the C-terminal domain (CTD) of the largest subunit of RNA polymerase II. The protein is RNA polymerase II holoenzyme cyclin-like subunit (SSN8) of Debaryomyces hansenii (strain ATCC 36239 / CBS 767 / BCRC 21394 / JCM 1990 / NBRC 0083 / IGC 2968) (Yeast).